The following is a 184-amino-acid chain: Protein DP71L (184 aa).

Over residues 1–15 the composition is skewed to basic residues; sequence MSRRNKRSRRRRKKP. Residues 1 to 41 are disordered; sequence MSRRNKRSRRRRKKPLNTIQPGPSKPSAQDEPIKSVSHHSS. Important for host CHOP inhibition regions lie at residues 125-127 and 169-173; these read VYF and LSAVL.

This sequence belongs to the asfivirus DP71L family. As to quaternary structure, interacts (via C-terminus) with host PPP1CB.

Interacts with the host phosphatase PP1 catalytic subunit (PPP1CB) and recruits it to dephosphorylate EIF2S1/eIF2alpha and therefore restores the host translation that has been shut-down by the host. Also inhibits the EIF2S1/eIF2alpha-ATF4-DDIT3/CHOP pathway. The sequence is that of Protein DP71L from Ornithodoros (relapsing fever ticks).